We begin with the raw amino-acid sequence, 67 residues long: DNA-directed RNA polymerase subunit omega (67 aa).

This sequence belongs to the RNA polymerase subunit omega family. As to quaternary structure, the RNAP catalytic core consists of 2 alpha, 1 beta, 1 beta' and 1 omega subunit. When a sigma factor is associated with the core the holoenzyme is formed, which can initiate transcription.

The enzyme catalyses RNA(n) + a ribonucleoside 5'-triphosphate = RNA(n+1) + diphosphate. Promotes RNA polymerase assembly. Latches the N- and C-terminal regions of the beta' subunit thereby facilitating its interaction with the beta and alpha subunits. This chain is DNA-directed RNA polymerase subunit omega, found in Listeria monocytogenes serotype 4b (strain F2365).